A 149-amino-acid chain; its full sequence is Putative inactive group IIC secretory phospholipase A2 (149 aa).

Positions 1-18 (MKVIAILTLLLFCSPTHS) are cleaved as a signal peptide. 4 disulfides stabilise this stretch: C44–C142, C77–C107, C95–C112, and C97–C105. 3 residues coordinate Ca(2+): Y45, G47, and G49.

Belongs to the phospholipase A2 family. It depends on Ca(2+) as a cofactor.

The protein localises to the secreted. Inactive phospholipase. In Homo sapiens (Human), this protein is Putative inactive group IIC secretory phospholipase A2 (PLA2G2C).